An 814-amino-acid polypeptide reads, in one-letter code: Lon protease (814 aa).

A disordered region spans residues 1-20; sequence MANEAHNIEHTDPEFRDDSA. The Lon N-terminal domain maps to 25–219; that stretch reads LPLLPVRDTV…KINQHLAKEL (195 aa). 372-379 serves as a coordination point for ATP; sequence GPPGVGKT. Residues 610–792 enclose the Lon proteolytic domain; it reads TKRAGVVVGL…DEVLEIALPS (183 aa). Catalysis depends on residues S697 and K740.

This sequence belongs to the peptidase S16 family. In terms of assembly, homohexamer. Organized in a ring with a central cavity.

Its subcellular location is the cytoplasm. It catalyses the reaction Hydrolysis of proteins in presence of ATP.. In terms of biological role, ATP-dependent serine protease that mediates the selective degradation of mutant and abnormal proteins as well as certain short-lived regulatory proteins. Required for cellular homeostasis and for survival from DNA damage and developmental changes induced by stress. Degrades polypeptides processively to yield small peptide fragments that are 5 to 10 amino acids long. Binds to DNA in a double-stranded, site-specific manner. This is Lon protease from Koribacter versatilis (strain Ellin345).